Reading from the N-terminus, the 65-residue chain is Large ribosomal subunit protein bL35 (65 aa).

It belongs to the bacterial ribosomal protein bL35 family.

This Prochlorococcus marinus (strain NATL1A) protein is Large ribosomal subunit protein bL35.